The chain runs to 237 residues: Small ribosomal subunit protein uS2 (237 aa).

Belongs to the universal ribosomal protein uS2 family.

The polypeptide is Small ribosomal subunit protein uS2 (Clostridioides difficile (strain 630) (Peptoclostridium difficile)).